A 236-amino-acid chain; its full sequence is Probable transcriptional regulatory protein UU295 (236 aa).

It belongs to the TACO1 family.

The protein resides in the cytoplasm. The polypeptide is Probable transcriptional regulatory protein UU295 (Ureaplasma parvum serovar 3 (strain ATCC 700970)).